A 1252-amino-acid polypeptide reads, in one-letter code: Immunoglobulin superfamily DCC subclass member 4 (1252 aa).

Positions 1-22 are cleaved as a signal peptide; sequence MARADTGRGLLVLTFCLLSARG. The Extracellular segment spans residues 23 to 956; that stretch reads ELPLPQETTV…SDSLDVHAVT (934 aa). Ig-like domains are found at residues 27–136, 142–228, 241–329, and 334–420; these read PQET…VAVV, EDFS…ASLT, QDVV…AELR, and PAIS…APLA. Intrachain disulfides connect C55/C120 and C163/C211. The N-linked (GlcNAc...) asparagine glycan is linked to N88. Residue N251 is glycosylated (N-linked (GlcNAc...) asparagine). 2 cysteine pairs are disulfide-bonded: C264–C311 and C355–C404. 5 Fibronectin type-III domains span residues 430–524, 526–622, 631–742, 751–844, and 849–944; these read APTR…TLDD, PSAA…TPGV, APAE…TPDL, PPAH…TLPD, and PPSD…TLQK. The tract at residues 669–688 is disordered; that stretch reads TEEEADGDRPPGGRGDQAWD. Residues 957–977 form a helical membrane-spanning segment; the sequence is GIIVGVCLGLLCLLACMCAGL. The Cytoplasmic portion of the chain corresponds to 978–1252; sequence RRSSHREALP…RAPVSSAQVP (275 aa). T994 carries the phosphothreonine modification.

Belongs to the immunoglobulin superfamily. DCC family. As to expression, expressed in skeletal muscle, heart and brain. Brain expression is hippocampus-specific.

The protein localises to the cell membrane. The protein is Immunoglobulin superfamily DCC subclass member 4 (Igdcc4) of Mus musculus (Mouse).